A 565-amino-acid polypeptide reads, in one-letter code: NAD-dependent malic enzyme (565 aa).

The active-site Proton donor is tyrosine 104. Arginine 157 serves as a coordination point for NAD(+). Lysine 175 functions as the Proton acceptor in the catalytic mechanism. Glutamate 246, aspartate 247, and aspartate 270 together coordinate a divalent metal cation. Positions 270 and 418 each coordinate NAD(+).

It belongs to the malic enzymes family. Homotetramer. Mg(2+) is required as a cofactor. Mn(2+) serves as cofactor.

The enzyme catalyses (S)-malate + NAD(+) = pyruvate + CO2 + NADH. It carries out the reaction oxaloacetate + H(+) = pyruvate + CO2. In Pectobacterium atrosepticum (strain SCRI 1043 / ATCC BAA-672) (Erwinia carotovora subsp. atroseptica), this protein is NAD-dependent malic enzyme.